Consider the following 163-residue polypeptide: Cyclic pyranopterin monophosphate synthase (163 aa).

Substrate is bound by residues 75-77 and 113-114; these read LCH and ME. D128 is an active-site residue.

Belongs to the MoaC family. In terms of assembly, homohexamer; trimer of dimers.

It catalyses the reaction (8S)-3',8-cyclo-7,8-dihydroguanosine 5'-triphosphate = cyclic pyranopterin phosphate + diphosphate. It functions in the pathway cofactor biosynthesis; molybdopterin biosynthesis. Catalyzes the conversion of (8S)-3',8-cyclo-7,8-dihydroguanosine 5'-triphosphate to cyclic pyranopterin monophosphate (cPMP). The sequence is that of Cyclic pyranopterin monophosphate synthase from Magnetococcus marinus (strain ATCC BAA-1437 / JCM 17883 / MC-1).